The chain runs to 210 residues: Large ribosomal subunit protein uL4 (210 aa).

Residues 49-76 form a disordered region; the sequence is HCTKTRSEVSGGGKKPWRQKHTGRARHG. Residues 63–76 show a composition bias toward basic residues; that stretch reads KPWRQKHTGRARHG.

Belongs to the universal ribosomal protein uL4 family. Part of the 50S ribosomal subunit.

Its function is as follows. One of the primary rRNA binding proteins, this protein initially binds near the 5'-end of the 23S rRNA. It is important during the early stages of 50S assembly. It makes multiple contacts with different domains of the 23S rRNA in the assembled 50S subunit and ribosome. Forms part of the polypeptide exit tunnel. This is Large ribosomal subunit protein uL4 from Thermodesulfovibrio yellowstonii (strain ATCC 51303 / DSM 11347 / YP87).